A 262-amino-acid chain; its full sequence is LysM domain-containing protein ARB_03438 (262 aa).

A signal peptide spans 1-22; that stretch reads MVSIPLILGAIILLGTRKAATA. The 45-residue stretch at 31–75 folds into the LysM 1 domain; it reads FAVTAATDDTCQSLGAQWGIGMAQFLKWNPGVNCNALVAGKTYCL. Residues 85-112 are disordered; it reads TASLTPSPQVPTTSRATQTMTSKASTGT. Residues 86–112 are compositionally biased toward polar residues; it reads ASLTPSPQVPTTSRATQTMTSKASTGT. Positions 132–179 constitute a LysM 2 domain; it reads FYHPVSPGDTCQSIVDRYKAFTLDQFYTWNPSVGKNCESLWLGYYVCT. Positions 184–240 are disordered; sequence GPNSPSQQPPSQQPPSQQSPSQQSPSQQSPSQQPPSQQPPSQQPPSQQSNTSQQTQP. Over residues 197-214 the composition is skewed to low complexity; it reads PPSQQSPSQQSPSQQSPS. Positions 215 to 226 are enriched in pro residues; the sequence is QQPPSQQPPSQQ. Positions 227-240 are enriched in low complexity; that stretch reads PPSQQSNTSQQTQP. An N-linked (GlcNAc...) asparagine glycan is attached at asparagine 233.

The protein localises to the secreted. Might have a role in sequestration of chitin oligosaccharides (breakdown products of fungal cell walls that are released during invasion and act as triggers of host immunity) to dampen host defense. The sequence is that of LysM domain-containing protein ARB_03438 from Arthroderma benhamiae (strain ATCC MYA-4681 / CBS 112371) (Trichophyton mentagrophytes).